The primary structure comprises 560 residues: Eukaryotic translation initiation factor 3 subunit D-1 (560 aa).

Residues 98–166 (VQKPPHQRGR…RGPPPKMRES (69 aa)) form a disordered region. Positions 100-121 (KPPHQRGRFRNMRNSRSGRGRN) are enriched in basic residues. The residue at position 128 (Thr128) is a Phosphothreonine. A compositionally biased stretch (basic residues) spans 147-156 (GRGMGKKFGH). The tract at residues 291–305 (EFDLLTVNESSVEPP) is RNA gate.

Belongs to the eIF-3 subunit D family. In terms of assembly, component of the eukaryotic translation initiation factor 3 (eIF-3) complex. The eIF-3 complex interacts with pix.

It is found in the cytoplasm. MRNA cap-binding component of the eukaryotic translation initiation factor 3 (eIF-3) complex, which is involved in protein synthesis of a specialized repertoire of mRNAs and, together with other initiation factors, stimulates binding of mRNA and methionyl-tRNAi to the 40S ribosome. The eIF-3 complex specifically targets and initiates translation of a subset of mRNAs involved in cell proliferation. In the eIF-3 complex, eif3d specifically recognizes and binds the 7-methylguanosine cap of a subset of mRNAs. The protein is Eukaryotic translation initiation factor 3 subunit D-1 of Drosophila yakuba (Fruit fly).